The chain runs to 266 residues: ATP synthase subunit a (266 aa).

Helical transmembrane passes span Lys38–Ala58, Leu99–Ile119, His126–Ile146, Gly162–Val182, Leu191–Tyr211, and Ser224–Leu244.

It belongs to the ATPase A chain family. As to quaternary structure, F-type ATPases have 2 components, CF(1) - the catalytic core - and CF(0) - the membrane proton channel. CF(1) has five subunits: alpha(3), beta(3), gamma(1), delta(1), epsilon(1). CF(0) has three main subunits: a(1), b(2) and c(9-12). The alpha and beta chains form an alternating ring which encloses part of the gamma chain. CF(1) is attached to CF(0) by a central stalk formed by the gamma and epsilon chains, while a peripheral stalk is formed by the delta and b chains.

It localises to the cell membrane. Key component of the proton channel; it plays a direct role in the translocation of protons across the membrane. The sequence is that of ATP synthase subunit a from Pseudarthrobacter chlorophenolicus (strain ATCC 700700 / DSM 12829 / CIP 107037 / JCM 12360 / KCTC 9906 / NCIMB 13794 / A6) (Arthrobacter chlorophenolicus).